The chain runs to 257 residues: Beta-fibrinogenase (257 aa).

An N-terminal signal peptide occupies residues 1–18; sequence MVLIRVLANLLLLQLSHA. A propeptide spanning residues 19-24 is cleaved from the precursor; it reads QKSSEL. Residues 25 to 248 enclose the Peptidase S1 domain; that stretch reads VVGGDECNIN…YTDWIQSIIA (224 aa). 6 cysteine pairs are disulfide-bonded: Cys31–Cys162, Cys49–Cys65, Cys97–Cys255, Cys141–Cys209, Cys173–Cys188, and Cys199–Cys224. A glycan (N-linked (GlcNAc...) asparagine) is linked at Asn44. His64 functions as the Charge relay system in the catalytic mechanism. N-linked (GlcNAc...) asparagine glycosylation is found at Asn78 and Asn102. Catalysis depends on Asp109, which acts as the Charge relay system. Residues Asn153 and Asn169 are each glycosylated (N-linked (GlcNAc...) asparagine). The active-site Charge relay system is the Ser203. A glycan (N-linked (GlcNAc...) asparagine) is linked at Asn250.

As to quaternary structure, monomer. Glycosylated. Contains 23.0% of hexoses, 8.3% of hexosamines and 1.0% of sialic acids. Expressed by the venom gland.

The protein resides in the secreted. With respect to regulation, inhibited by diisopropylfluorophosphate (DFP) and PMSF. Its function is as follows. Snake venom serine protease that has fibrinogenolytic activities by hydrolyzing the beta chain of fibrinogen (FGB). Typical arginine esterase which hydrolyzes esters and amides of arginine. In Macrovipera lebetinus (Levantine viper), this protein is Beta-fibrinogenase.